Reading from the N-terminus, the 656-residue chain is Macrolide export ATP-binding/permease protein MacB (656 aa).

The 239-residue stretch at 20-258 (IELAGITRSF…EPDFAPHVDR (239 aa)) folds into the ABC transporter domain. An ATP-binding site is contributed by 56–63 (GASGSGKS). The next 4 helical transmembrane spans lie at 284 to 304 (ALTL…LAIG), 531 to 551 (LTIL…IGVM), 591 to 611 (ALGG…IALF), and 619 to 639 (LLPV…FGYL).

It belongs to the ABC transporter superfamily. Macrolide exporter (TC 3.A.1.122) family. Homodimer.

It is found in the cell inner membrane. In terms of biological role, non-canonical ABC transporter that contains transmembrane domains (TMD), which form a pore in the inner membrane, and an ATP-binding domain (NBD), which is responsible for energy generation. Confers resistance against macrolides. In Azoarcus sp. (strain BH72), this protein is Macrolide export ATP-binding/permease protein MacB.